A 247-amino-acid chain; its full sequence is ATP synthase subunit a, chloroplastic (247 aa).

5 consecutive transmembrane segments (helical) span residues 38–58, 95–115, 134–154, 199–219, and 220–240; these read QVLI…AIAV, VPFI…GALL, INTT…AGLT, LVVV…VMFL, and GLFT…AYIG.

The protein belongs to the ATPase A chain family. As to quaternary structure, F-type ATPases have 2 components, CF(1) - the catalytic core - and CF(0) - the membrane proton channel. CF(1) has five subunits: alpha(3), beta(3), gamma(1), delta(1), epsilon(1). CF(0) has four main subunits: a, b, b' and c.

It localises to the plastid. It is found in the chloroplast thylakoid membrane. In terms of biological role, key component of the proton channel; it plays a direct role in the translocation of protons across the membrane. The protein is ATP synthase subunit a, chloroplastic (atpI) of Spinacia oleracea (Spinach).